A 400-amino-acid chain; its full sequence is Exodeoxyribonuclease 7 large subunit (400 aa).

It belongs to the XseA family. In terms of assembly, heterooligomer composed of large and small subunits.

It is found in the cytoplasm. The enzyme catalyses Exonucleolytic cleavage in either 5'- to 3'- or 3'- to 5'-direction to yield nucleoside 5'-phosphates.. Bidirectionally degrades single-stranded DNA into large acid-insoluble oligonucleotides, which are then degraded further into small acid-soluble oligonucleotides. The protein is Exodeoxyribonuclease 7 large subunit of Clostridium perfringens (strain SM101 / Type A).